The primary structure comprises 129 residues: Small ribosomal subunit protein uS11c (129 aa).

This sequence belongs to the universal ribosomal protein uS11 family. In terms of assembly, part of the 30S ribosomal subunit.

It localises to the plastid. The protein resides in the chloroplast. This Pleurastrum terricola (Filamentous green alga) protein is Small ribosomal subunit protein uS11c.